The chain runs to 133 residues: MKTFPVSIVTPDGPVYEKEVEMVSVKAESGEMGILPGHIPTVAPLKISAVRLKNGGHTDYVAVSGGFIEVRPDKVTVLATSAEEANHIDTHRANEAKRRAEQRLQDKQAHVDFKRAELALKRAINRLDVSNMK.

Belongs to the ATPase epsilon chain family. In terms of assembly, F-type ATPases have 2 components, CF(1) - the catalytic core - and CF(0) - the membrane proton channel. CF(1) has five subunits: alpha(3), beta(3), gamma(1), delta(1), epsilon(1). CF(0) has three main subunits: a, b and c.

The protein resides in the cell membrane. Functionally, produces ATP from ADP in the presence of a proton gradient across the membrane. The sequence is that of ATP synthase epsilon chain from Bacillus cytotoxicus (strain DSM 22905 / CIP 110041 / 391-98 / NVH 391-98).